Here is a 155-residue protein sequence, read N- to C-terminus: Endoribonuclease YbeY (155 aa).

Zn(2+) contacts are provided by histidine 120, histidine 124, and histidine 130.

Belongs to the endoribonuclease YbeY family. Requires Zn(2+) as cofactor.

It localises to the cytoplasm. In terms of biological role, single strand-specific metallo-endoribonuclease involved in late-stage 70S ribosome quality control and in maturation of the 3' terminus of the 16S rRNA. The chain is Endoribonuclease YbeY from Alkaliphilus metalliredigens (strain QYMF).